We begin with the raw amino-acid sequence, 200 residues long: Troponin I-like protein (200 aa).

2 disordered regions span residues 1 to 20 and 181 to 200; these read MGDE…AEVR and ENKA…ENEE. Positions 2-116 form a coiled coil; the sequence is GDEEKRKMEE…EDAKYDLEYE (115 aa).

It belongs to the troponin I family. As to expression, expressed in salivary gland, gut, muscle and cuticle (at protein level).

Its function is as follows. Inhibits endothelial cell proliferation and angiogenesis in a vertebrate host. Probably required for efficient blood feeding on vertebrate hosts. This is Troponin I-like protein from Haemaphysalis longicornis (Bush tick).